Consider the following 601-residue polypeptide: UvrABC system protein C (601 aa).

Residues 17–95 (TLPGVYRMLD…IKALAPRYNI (79 aa)) enclose the GIY-YIG domain. The UVR domain occupies 204–239 (SELINELTRRMTAAAEAMAFEQAAELRDQIQALARV).

Belongs to the UvrC family. As to quaternary structure, interacts with UvrB in an incision complex.

It is found in the cytoplasm. Its function is as follows. The UvrABC repair system catalyzes the recognition and processing of DNA lesions. UvrC both incises the 5' and 3' sides of the lesion. The N-terminal half is responsible for the 3' incision and the C-terminal half is responsible for the 5' incision. The protein is UvrABC system protein C of Chromobacterium violaceum (strain ATCC 12472 / DSM 30191 / JCM 1249 / CCUG 213 / NBRC 12614 / NCIMB 9131 / NCTC 9757 / MK).